Consider the following 402-residue polypeptide: 4-hydroxy-3-methylbut-2-enyl diphosphate reductase (402 aa).

Cysteine 66 lines the [4Fe-4S] cluster pocket. A (2E)-4-hydroxy-3-methylbut-2-enyl diphosphate-binding site is contributed by histidine 96. Histidine 96 contributes to the dimethylallyl diphosphate binding site. Histidine 96 serves as a coordination point for isopentenyl diphosphate. Cysteine 157 provides a ligand contact to [4Fe-4S] cluster. Histidine 185 lines the (2E)-4-hydroxy-3-methylbut-2-enyl diphosphate pocket. Residue histidine 185 participates in dimethylallyl diphosphate binding. Histidine 185 contacts isopentenyl diphosphate. Catalysis depends on glutamate 187, which acts as the Proton donor. Threonine 250 lines the (2E)-4-hydroxy-3-methylbut-2-enyl diphosphate pocket. A [4Fe-4S] cluster-binding site is contributed by cysteine 288. Positions 317, 318, 319, and 379 each coordinate (2E)-4-hydroxy-3-methylbut-2-enyl diphosphate. Serine 317, serine 318, asparagine 319, and serine 379 together coordinate dimethylallyl diphosphate. Residues serine 317, serine 318, asparagine 319, and serine 379 each contribute to the isopentenyl diphosphate site.

Belongs to the IspH family. The cofactor is [4Fe-4S] cluster.

It carries out the reaction isopentenyl diphosphate + 2 oxidized [2Fe-2S]-[ferredoxin] + H2O = (2E)-4-hydroxy-3-methylbut-2-enyl diphosphate + 2 reduced [2Fe-2S]-[ferredoxin] + 2 H(+). It catalyses the reaction dimethylallyl diphosphate + 2 oxidized [2Fe-2S]-[ferredoxin] + H2O = (2E)-4-hydroxy-3-methylbut-2-enyl diphosphate + 2 reduced [2Fe-2S]-[ferredoxin] + 2 H(+). It functions in the pathway isoprenoid biosynthesis; dimethylallyl diphosphate biosynthesis; dimethylallyl diphosphate from (2E)-4-hydroxy-3-methylbutenyl diphosphate: step 1/1. It participates in isoprenoid biosynthesis; isopentenyl diphosphate biosynthesis via DXP pathway; isopentenyl diphosphate from 1-deoxy-D-xylulose 5-phosphate: step 6/6. Functionally, catalyzes the conversion of 1-hydroxy-2-methyl-2-(E)-butenyl 4-diphosphate (HMBPP) into a mixture of isopentenyl diphosphate (IPP) and dimethylallyl diphosphate (DMAPP). Acts in the terminal step of the DOXP/MEP pathway for isoprenoid precursor biosynthesis. The chain is 4-hydroxy-3-methylbut-2-enyl diphosphate reductase from Nostoc punctiforme (strain ATCC 29133 / PCC 73102).